A 317-amino-acid chain; its full sequence is 4-hydroxy-3-methylbut-2-enyl diphosphate reductase (317 aa).

Cysteine 12 lines the [4Fe-4S] cluster pocket. The (2E)-4-hydroxy-3-methylbut-2-enyl diphosphate site is built by histidine 41 and histidine 74. Dimethylallyl diphosphate contacts are provided by histidine 41 and histidine 74. Positions 41 and 74 each coordinate isopentenyl diphosphate. Cysteine 97 lines the [4Fe-4S] cluster pocket. Histidine 125 contributes to the (2E)-4-hydroxy-3-methylbut-2-enyl diphosphate binding site. Histidine 125 contributes to the dimethylallyl diphosphate binding site. Histidine 125 is an isopentenyl diphosphate binding site. The active-site Proton donor is glutamate 127. Threonine 168 provides a ligand contact to (2E)-4-hydroxy-3-methylbut-2-enyl diphosphate. Residue cysteine 198 coordinates [4Fe-4S] cluster. (2E)-4-hydroxy-3-methylbut-2-enyl diphosphate contacts are provided by serine 226, serine 227, asparagine 228, and serine 270. Positions 226, 227, 228, and 270 each coordinate dimethylallyl diphosphate. Isopentenyl diphosphate contacts are provided by serine 226, serine 227, asparagine 228, and serine 270.

It belongs to the IspH family. As to quaternary structure, homodimer. The cofactor is [4Fe-4S] cluster.

The catalysed reaction is isopentenyl diphosphate + 2 oxidized [2Fe-2S]-[ferredoxin] + H2O = (2E)-4-hydroxy-3-methylbut-2-enyl diphosphate + 2 reduced [2Fe-2S]-[ferredoxin] + 2 H(+). The enzyme catalyses dimethylallyl diphosphate + 2 oxidized [2Fe-2S]-[ferredoxin] + H2O = (2E)-4-hydroxy-3-methylbut-2-enyl diphosphate + 2 reduced [2Fe-2S]-[ferredoxin] + 2 H(+). It functions in the pathway isoprenoid biosynthesis; dimethylallyl diphosphate biosynthesis; dimethylallyl diphosphate from (2E)-4-hydroxy-3-methylbutenyl diphosphate: step 1/1. The protein operates within isoprenoid biosynthesis; isopentenyl diphosphate biosynthesis via DXP pathway; isopentenyl diphosphate from 1-deoxy-D-xylulose 5-phosphate: step 6/6. Functionally, catalyzes the conversion of 1-hydroxy-2-methyl-2-(E)-butenyl 4-diphosphate (HMBPP) into a mixture of isopentenyl diphosphate (IPP) and dimethylallyl diphosphate (DMAPP). Acts in the terminal step of the DOXP/MEP pathway for isoprenoid precursor biosynthesis. In Serratia proteamaculans (strain 568), this protein is 4-hydroxy-3-methylbut-2-enyl diphosphate reductase.